Consider the following 759-residue polypeptide: Catalase-peroxidase (759 aa).

The disordered stretch occupies residues Met1–Asn24. Residues Trp96–Tyr242 constitute a cross-link (tryptophyl-tyrosyl-methioninium (Trp-Tyr) (with M-268)). His97 acts as the Proton acceptor in catalysis. The segment at residues Tyr242 to Met268 is a cross-link (tryptophyl-tyrosyl-methioninium (Tyr-Met) (with W-96)). Residue His283 coordinates heme b.

It belongs to the peroxidase family. Peroxidase/catalase subfamily. Homodimer or homotetramer. Heme b serves as cofactor. In terms of processing, formation of the three residue Trp-Tyr-Met cross-link is important for the catalase, but not the peroxidase activity of the enzyme.

It localises to the cytoplasm. It carries out the reaction H2O2 + AH2 = A + 2 H2O. It catalyses the reaction 2 H2O2 = O2 + 2 H2O. Functionally, bifunctional enzyme with both catalase and broad-spectrum peroxidase activity. This Neosartorya fischeri (strain ATCC 1020 / DSM 3700 / CBS 544.65 / FGSC A1164 / JCM 1740 / NRRL 181 / WB 181) (Aspergillus fischerianus) protein is Catalase-peroxidase.